Reading from the N-terminus, the 775-residue chain is Protein STRUBBELIG-RECEPTOR FAMILY 1 (775 aa).

A signal peptide spans 1 to 31 (MRSMRSGRDNNICFLGFLSFALISLPSLSLA). The Extracellular segment spans residues 32-314 (LTNPDDVAAI…GKEDSFTSKR (283 aa)). LRR repeat units follow at residues 101 to 122 (SLKA…TLPV), 123 to 146 (SLQN…SSLK), 147 to 169 (SLSV…FQDL), 171 to 193 (LMIN…MQNL), 195 to 217 (TLTS…QDLP), and 218 to 238 (LKDL…KLLS). N-linked (GlcNAc...) asparagine glycosylation is present at asparagine 133. 2 N-linked (GlcNAc...) asparagine glycosylation sites follow: asparagine 181 and asparagine 192. N-linked (GlcNAc...) asparagine glycosylation occurs at asparagine 250. Residues 254–308 (APSPSPETPPSPTSPKRPFFGPPSPNASAGHGQAHVRSPPSDHHPSRPTPQGKED) are disordered. Pro residues predominate over residues 256 to 278 (SPSPETPPSPTSPKRPFFGPPSP). Residue asparagine 279 is glycosylated (N-linked (GlcNAc...) asparagine). Residues 315-335 (IIWISILGAFSFVVLALVCLL) form a helical membrane-spanning segment. Residues 336–775 (CGRKCLRKRE…NGDNQYTGRR (440 aa)) lie on the Cytoplasmic side of the membrane. Residues 345–414 (EDSEQLSKPH…VGSESKQESH (70 aa)) form a disordered region. Positions 367-379 (RSNASMLPPSNTF) are enriched in polar residues. The segment covering 380 to 391 (NKDKEARPKERV) has biased composition (basic and acidic residues). A Protein kinase domain is found at 478–756 (FSHENLIGTG…EVVQDLSDMI (279 aa)).

Belongs to the protein kinase superfamily. Ser/Thr protein kinase family. In terms of tissue distribution, expressed in roots, stems, leaves and flowers. Low expression in seedlings and siliques.

Its subcellular location is the membrane. Its function is as follows. Not essential for epidermal patterning and not redundant with STRUBBELIG. In Arabidopsis thaliana (Mouse-ear cress), this protein is Protein STRUBBELIG-RECEPTOR FAMILY 1 (SRF1).